The chain runs to 806 residues: Transitional endoplasmic reticulum ATPase (806 aa).

N-acetylalanine is present on A2. A phosphoserine mark is found at S3 and S7. K8 participates in a covalent cross-link: Glycyl lysine isopeptide (Lys-Gly) (interchain with G-Cter in SUMO2). Residue S13 is modified to Phosphoserine. Residue K18 forms a Glycyl lysine isopeptide (Lys-Gly) (interchain with G-Cter in SUMO2) linkage. Position 37 is a phosphoserine (S37). P247–L253 serves as a coordination point for ATP. Residue K315 is modified to N6,N6,N6-trimethyllysine; by VCPKMT. The ATP site is built by N348 and H384. T436 carries the post-translational modification Phosphothreonine. A Phosphoserine modification is found at S462. 2 positions are modified to N6-acetyllysine: K502 and K505. G521–L526 serves as a coordination point for ATP. At K668 the chain carries N6-acetyllysine; alternate. N6-succinyllysine; alternate is present on K668. A Phosphoserine modification is found at S702. The interval R708–P727 is disordered. K754 is subject to N6-acetyllysine. The disordered stretch occupies residues F768 to G806. Phosphoserine is present on residues S770, S775, and S787. The segment covering N777–G793 has biased composition (gly residues). The interval T797–G806 is interaction with UBXN6. The PIM motif motif lies at D802–G806. Y805 is subject to Phosphotyrosine.

This sequence belongs to the AAA ATPase family. As to quaternary structure, homohexamer. Forms a ring-shaped particle of 12.5 nm diameter, that displays 6-fold radial symmetry. Part of a ternary complex containing STX5A, NSFL1C and VCP. NSFL1C forms a homotrimer that binds to one end of a VCP homohexamer. The complex binds to membranes enriched in phosphatidylethanolamine-containing lipids and promotes Golgi membrane fusion. Binds to a heterodimer of NPLOC4 and UFD1, binding to this heterodimer inhibits Golgi-membrane fusion. Interaction with VCIP135 leads to dissociation of the complex via ATP hydrolysis by VCP. Part of a ternary complex containing NPLOC4, UFD1 and VCP. Interacts with NSFL1C-like protein p37; the complex has membrane fusion activity and is required for Golgi and endoplasmic reticulum biogenesis. Interacts with SELENOS and SYVN1, as well as with DERL1 (via SHP-box motif), DERL2 and DERL3; which probably transfer misfolded proteins from the ER to VCP. Interacts with SVIP and forms a complex with SVIP and DERL1. Component of a complex required to couple retrotranslocation, ubiquitination and deglycosylation composed of NGLY1, SAKS1, AMFR, VCP and RAD23B. Part of a complex composed of STUB1/CHIP, VCP/p97, CHRNA3, and UBXN2A that modulates the ubiquitination and endoplasmic reticulum-associated degradation (ERAD) of CHRNA3. Within the complex UBXN2A acts as a scaffold protein required for the interaction of CHRNA3 with VCP/p97, this interaction also inhibits CHRNA3 ubiquitination by STUB1/CHIP and subsequently ERAD. Interacts with UBXN2A (via UBX domain); the interaction is required for the interaction of CHRNA3 in the STUB1-VCP-UBXN2A complex. Directly interacts with UBXN4 and RNF19A. Interacts with CASR. Interacts with UBE4B and YOD1. Interacts with clathrin. Interacts with RNF103. Interacts with TRIM13 and TRIM21. Component of a VCP/p97-AMFR/gp78 complex that participates in the final step of the endoplasmic reticulum-associated degradation (ERAD) of HMGCR. Interacts directly with AMFR/gp78 (via its VIM). Interacts with RHBDD1 (via C-terminal domain). Interacts with SPRTN; leading to recruitment to stalled replication forks. Interacts with WASHC5. Interacts with UBOX5. Interacts (via N-terminus) with UBXN7, UBXN8, and probably several other UBX domain-containing proteins (via UBX domains); the interactions are mutually exclusive with VIM-dependent interactions such as those with AMFR and SELENOS. Forms a complex with UBQLN1 and UBXN4. Interacts (via the PIM motif) with RNF31 (via the PUB domain). Interacts with RIGI and RNF125; interaction takes place when RIGI is ubiquitinated via 'Lys-63'-linked ubiquitin on its CARD domains, leading to recruit RNF125 and promote ubiquitination and degradation of RIGI. Interacts with BAG6. Interacts with UBXN10. Interacts with UBXN6; the interaction with UBXN6 is direct and competitive with UFD1. Forms a ternary complex with CAV1 and UBXN6. Interacts with PLAA, UBXN6 and YOD1; may form a complex involved in macroautophagy. Interacts with ANKZF1. Interacts with ubiquitin-binding protein FAF1. Interacts with ZFAND2B (via VIM motif); the interaction is direct. Interacts with ZFAND1 (via its ubiquitin-like region); this interaction occurs in an arsenite-dependent manner. Interacts with CCDC47. Interacts with UBAC2. Interacts with LMBR1L. Interacts with ATXN3. Interacts with TEX264; bridging VCP to covalent DNA-protein cross-links (DPCs). Interacts with FBXL4. In terms of processing, phosphorylated by tyrosine kinases in response to T-cell antigen receptor activation. Phosphorylated in mitotic cells. Post-translationally, ISGylated. Methylation at Lys-315 catalyzed by VCPKMT is increased in the presence of ASPSCR1. Lys-315 methylation may decrease ATPase activity.

The protein resides in the cytoplasm. The protein localises to the cytosol. It localises to the endoplasmic reticulum. Its subcellular location is the nucleus. It is found in the stress granule. The enzyme catalyses ATP + H2O = ADP + phosphate + H(+). Functionally, necessary for the fragmentation of Golgi stacks during mitosis and for their reassembly after mitosis. Involved in the formation of the transitional endoplasmic reticulum (tER). The transfer of membranes from the endoplasmic reticulum to the Golgi apparatus occurs via 50-70 nm transition vesicles which derive from part-rough, part-smooth transitional elements of the endoplasmic reticulum (tER). Vesicle budding from the tER is an ATP-dependent process. The ternary complex containing UFD1, VCP and NPLOC4 binds ubiquitinated proteins and is necessary for the export of misfolded proteins from the ER to the cytoplasm, where they are degraded by the proteasome. The NPLOC4-UFD1-VCP complex regulates spindle disassembly at the end of mitosis and is necessary for the formation of a closed nuclear envelope. Regulates E3 ubiquitin-protein ligase activity of RNF19A. Component of the VCP/p97-AMFR/gp78 complex that participates in the final step of the sterol-mediated ubiquitination and endoplasmic reticulum-associated degradation (ERAD) of HMGCR. Mediates the endoplasmic reticulum-associated degradation of CHRNA3 in cortical neurons as part of the STUB1-VCP-UBXN2A complex. Involved in endoplasmic reticulum stress-induced pre-emptive quality control, a mechanism that selectively attenuates the translocation of newly synthesized proteins into the endoplasmic reticulum and reroutes them to the cytosol for proteasomal degradation. Involved in clearance process by mediating G3BP1 extraction from stress granules. Also involved in DNA damage response: recruited to double-strand breaks (DSBs) sites in a RNF8- and RNF168-dependent manner and promotes the recruitment of TP53BP1 at DNA damage sites. Recruited to stalled replication forks by SPRTN: may act by mediating extraction of DNA polymerase eta (POLH) to prevent excessive translesion DNA synthesis and limit the incidence of mutations induced by DNA damage. Together with SPRTN metalloprotease, involved in the repair of covalent DNA-protein cross-links (DPCs) during DNA synthesis. Involved in interstrand cross-link repair in response to replication stress by mediating unloading of the ubiquitinated CMG helicase complex. Mediates extraction of PARP1 trapped to chromatin: recognizes and binds ubiquitinated PARP1 and promotes its removal. Required for cytoplasmic retrotranslocation of stressed/damaged mitochondrial outer-membrane proteins and their subsequent proteasomal degradation. Essential for the maturation of ubiquitin-containing autophagosomes and the clearance of ubiquitinated protein by autophagy. Acts as a negative regulator of type I interferon production by interacting with RIGI: interaction takes place when RIGI is ubiquitinated via 'Lys-63'-linked ubiquitin on its CARD domains, leading to recruit RNF125 and promote ubiquitination and degradation of RIGI. May play a role in the ubiquitin-dependent sorting of membrane proteins to lysosomes where they undergo degradation. May more particularly play a role in caveolins sorting in cells. By controlling the steady-state expression of the IGF1R receptor, indirectly regulates the insulin-like growth factor receptor signaling pathway. The protein is Transitional endoplasmic reticulum ATPase (VCP) of Homo sapiens (Human).